Reading from the N-terminus, the 186-residue chain is Ribosome-recycling factor (186 aa).

The protein belongs to the RRF family.

It is found in the cytoplasm. Responsible for the release of ribosomes from messenger RNA at the termination of protein biosynthesis. May increase the efficiency of translation by recycling ribosomes from one round of translation to another. The polypeptide is Ribosome-recycling factor (Burkholderia lata (strain ATCC 17760 / DSM 23089 / LMG 22485 / NCIMB 9086 / R18194 / 383)).